A 201-amino-acid polypeptide reads, in one-letter code: Probable GTP-binding protein EngB (201 aa).

The 176-residue stretch at 22-197 folds into the EngB-type G domain; sequence TFPEYAFIGR…LNYIESINKE (176 aa). GTP is bound by residues 30–37, 57–61, 75–78, 142–145, and 175–178; these read GRSNVGKS, GKTML, DLPG, TKAD, and ITSS. Mg(2+) is bound by residues serine 37 and threonine 59.

This sequence belongs to the TRAFAC class TrmE-Era-EngA-EngB-Septin-like GTPase superfamily. EngB GTPase family. Mg(2+) is required as a cofactor.

In terms of biological role, necessary for normal cell division and for the maintenance of normal septation. This chain is Probable GTP-binding protein EngB, found in Bacteroides fragilis (strain YCH46).